The primary structure comprises 286 residues: Energy-coupling factor transporter ATP-binding protein EcfA2 (286 aa).

In terms of domain architecture, ABC transporter spans 3 to 244 (IKVENVSFIY…AERLEKIGLS (242 aa)). 40–47 (GHTGSGKS) is a binding site for ATP.

Belongs to the ABC transporter superfamily. Energy-coupling factor EcfA family. Forms a stable energy-coupling factor (ECF) transporter complex composed of 2 membrane-embedded substrate-binding proteins (S component), 2 ATP-binding proteins (A component) and 2 transmembrane proteins (T component).

Its subcellular location is the cell membrane. ATP-binding (A) component of a common energy-coupling factor (ECF) ABC-transporter complex. Unlike classic ABC transporters this ECF transporter provides the energy necessary to transport a number of different substrates. This Caldanaerobacter subterraneus subsp. tengcongensis (strain DSM 15242 / JCM 11007 / NBRC 100824 / MB4) (Thermoanaerobacter tengcongensis) protein is Energy-coupling factor transporter ATP-binding protein EcfA2.